A 503-amino-acid polypeptide reads, in one-letter code: Aminoaldehyde dehydrogenase 1, peroxisomal (503 aa).

Asn27, Ile28, Asp99, and Leu189 together coordinate Na(+). 238–245 (GSSATGSK) is a binding site for NAD(+). The active-site Proton acceptor is the Glu260. NAD(+)-binding residues include Cys294 and Glu393. Cys294 functions as the Nucleophile in the catalytic mechanism. A Microbody targeting signal motif is present at residues 501–503 (SKL).

The protein belongs to the aldehyde dehydrogenase family. As to quaternary structure, forms homodimers.

The protein resides in the peroxisome. The catalysed reaction is 3-aminopropanal + NAD(+) + H2O = beta-alanine + NADH + 2 H(+). It carries out the reaction 4-aminobutanal + NAD(+) + H2O = 4-aminobutanoate + NADH + 2 H(+). The enzyme catalyses 4-guanidinobutanal + NAD(+) + H2O = 4-guanidinobutanoate + NADH + 2 H(+). The protein operates within amine and polyamine biosynthesis; betaine biosynthesis via choline pathway; betaine from betaine aldehyde: step 1/1. In terms of biological role, dehydrogenase that catalyzes the oxidation of several aminoaldehydes. Metabolizes and detoxifies aldehyde products of polyamine degradation to non-toxic amino acids. Catalyzes the oxidation of 3-aminopropanal to beta-alanine. Catalyzes the oxidation of 4-aminobutanal to 4-aminobutanoate. Catalyzes the oxidation of 4-guanidinobutanal to 4-guanidinobutanoate. This Pisum sativum (Garden pea) protein is Aminoaldehyde dehydrogenase 1, peroxisomal.